We begin with the raw amino-acid sequence, 704 residues long: ATP-dependent DNA helicase Hel308 (704 aa).

ATP-binding positions include Q31 and 49-56 (SPTASGKT). The Helicase ATP-binding domain occupies 36–200 (RKGLLDGKRL…WLNAELVATN (165 aa)). Positions 148–151 (DEFH) match the DEAH box motif. In terms of domain architecture, Helicase C-terminal spans 235–439 (AIIAYTLDIV…AFYSFLISII (205 aa)). Positions 366–645 (VVGYMDLIPV…LHARVKDGVK (280 aa)) are binds Hjc. The interval 432 to 644 (YSFLISIIAS…ELHARVKDGV (213 aa)) is required for helicase activity. Residues 646 to 704 (PELIELVKIPGIGRVRARLLYQHDIKKPEDIVLNPEKVKQLLGPNLGEKIVREAARTIA) are inhibits intrinsic ATPase, and helicase.

This sequence belongs to the helicase family. Hel308 subfamily. In terms of assembly, monomer; forms a 1:2 complex with Hjc, which may form a complex with Holliday junction DNA. Mg(2+) is required as a cofactor.

It carries out the reaction Couples ATP hydrolysis with the unwinding of duplex DNA by translocating in the 3'-5' direction.. The enzyme catalyses ATP + H2O = ADP + phosphate + H(+). It catalyses the reaction Couples ATP hydrolysis with the unwinding of duplex DNA at the replication fork by translocating in the 5'-3' direction. This creates two antiparallel DNA single strands (ssDNA). The leading ssDNA polymer is the template for DNA polymerase III holoenzyme which synthesizes a continuous strand.. With respect to regulation, helicase activity is inhibited by Hjc and by PCNA123 and PCNA323. Its function is as follows. An ATP, Mg(2+)-dependent DNA 3'-5' and 5'-3' helicase that may be involved in repair of stalled replication forks. Stimulated by both ss and dsDNA. Unwinds both leading and lagging strands in replication fork structures, unlike orthologs in P.furiosus and M.thermautotrophicus which only unwind the lagging strand and only have 3'-5' helicase activity. Preferentially binds dsDNA with overhangs or branched DNA. Able to anneal DNA substrates that could form a replication fork-like structure, has replication fork reversal activity (at least in vitro). The sequence is that of ATP-dependent DNA helicase Hel308 from Sulfurisphaera tokodaii (strain DSM 16993 / JCM 10545 / NBRC 100140 / 7) (Sulfolobus tokodaii).